The primary structure comprises 301 residues: General transcription and DNA repair factor IIH subunit TFB4 (301 aa).

A C4-type zinc finger spans residues 259-276 (CSVCLSIFCEHHKKCSTC).

The protein belongs to the TFB4 family. Component of the 7-subunit TFIIH core complex composed of XPB, XPD, TFB1/GTF2H1, GTF2H2/P44, TFB4/GTF2H3, TFB2/GTF2H4 and TFB5/GTF2H5, which is active in NER. The core complex associates with the 3-subunit CDK-activating kinase (CAK) module composed of CYCH1/cyclin H1, CDKD and MAT1/At4g30820 to form the 10-subunit holoenzyme (holo-TFIIH) active in transcription.

Its subcellular location is the nucleus. Functionally, component of the general transcription and DNA repair factor IIH (TFIIH) core complex, which is involved in general and transcription-coupled nucleotide excision repair (NER) of damaged DNA and, when complexed to CAK, in RNA transcription by RNA polymerase II. In NER, TFIIH acts by opening DNA around the lesion to allow the excision of the damaged oligonucleotide and its replacement by a new DNA fragment. In transcription, TFIIH has an essential role in transcription initiation. When the pre-initiation complex (PIC) has been established, TFIIH is required for promoter opening and promoter escape. Phosphorylation of the C-terminal tail (CTD) of the largest subunit of RNA polymerase II by the kinase module CAK controls the initiation of transcription. The protein is General transcription and DNA repair factor IIH subunit TFB4 of Arabidopsis thaliana (Mouse-ear cress).